A 359-amino-acid chain; its full sequence is WD repeat-containing protein 89 homolog (359 aa).

6 WD repeats span residues 23–62, 65–104, 106–144, 146–186, 192–232, and 294–333; these read IGDD…ILNV, GHKD…CSQT, NQQG…RKFD, SHTE…DDDA, NAED…KIKH, and VHTD…TNIL.

This is WD repeat-containing protein 89 homolog (wdr89) from Dictyostelium discoideum (Social amoeba).